A 37-amino-acid polypeptide reads, in one-letter code: NAD-reducing hydrogenase HoxS subunit alpha (37 aa).

The protein belongs to the complex I 51 kDa subunit family. In terms of assembly, tetramer of an alpha and a gamma subunits (flavin-containing dimer), and a delta and a nickel-containing beta subunits (hydrogenase dimer). It depends on FMN as a cofactor. [4Fe-4S] cluster is required as a cofactor.

The protein resides in the cytoplasm. It carries out the reaction H2 + NAD(+) = NADH + H(+). In terms of biological role, subunits alpha and gamma of HoxS constitute an NADH--oxidoreductase. In Rhodococcus opacus (Nocardia opaca), this protein is NAD-reducing hydrogenase HoxS subunit alpha (hoxF).